A 735-amino-acid chain; its full sequence is Muskelin (735 aa).

The residue at position 2 (Ala2) is an N-acetylalanine. The LisH domain occupies 172–204 (REQEAIRLCLKHFRQHNYTEAFESLQKKTKIAL). A CTLH domain is found at 206–258 (HPMLTDIHDKLVLKGDFDACEELIEKAVNDGLFNQYISQQEYKPRWSQIIPKS). 6 Kelch repeats span residues 284-330 (TVYL…SCHK), 339-391 (QIYT…FDHQ), 408-458 (ILTC…SRIG), 469-515 (CLYV…TGFT), 526-578 (EIHV…SLQE), and 597-651 (VHYL…AQVD).

In terms of assembly, homodimer; may form higher oligomers. Identified in the CTLH complex that contains GID4, RANBP9 and/or RANBP10, MKLN1, MAEA, RMND5A (or alternatively its paralog RMND5B), GID8, ARMC8, WDR26 and YPEL5. Within this complex, MAEA, RMND5A (or alternatively its paralog RMND5B), GID8, WDR26, and RANBP9 and/or RANBP10 form the catalytic core, while GID4, MKLN1, ARMC8 and YPEL5 have ancillary roles. Interacts with RANBP9. Part of a complex consisting of RANBP9, MKLN1 and GID8. Interacts with GABRA1. Interacts with the C-terminal tail of PTGER3.

The protein localises to the cytoplasm. It localises to the cytosol. The protein resides in the nucleus. It is found in the nucleoplasm. Its subcellular location is the cell projection. The protein localises to the ruffle. It localises to the cell cortex. The protein resides in the synapse. It is found in the postsynapse. Functionally, component of the CTLH E3 ubiquitin-protein ligase complex that selectively accepts ubiquitin from UBE2H and mediates ubiquitination and subsequent proteasomal degradation of the transcription factor HBP1. Required for internalization of the GABA receptor GABRA1 from the cell membrane via endosomes and subsequent GABRA1 degradation. Acts as a mediator of cell spreading and cytoskeletal responses to the extracellular matrix component THBS1. The chain is Muskelin (MKLN1) from Homo sapiens (Human).